Consider the following 403-residue polypeptide: Ribosomal RNA large subunit methyltransferase I (403 aa).

The PUA domain occupies Tyr9–Arg88.

This sequence belongs to the methyltransferase superfamily. RlmI family.

Its subcellular location is the cytoplasm. It carries out the reaction cytidine(1962) in 23S rRNA + S-adenosyl-L-methionine = 5-methylcytidine(1962) in 23S rRNA + S-adenosyl-L-homocysteine + H(+). Its function is as follows. Specifically methylates the cytosine at position 1962 (m5C1962) of 23S rRNA. The polypeptide is Ribosomal RNA large subunit methyltransferase I (Salmonella typhi).